We begin with the raw amino-acid sequence, 93 residues long: UPF0223 protein str0998 (93 aa).

This sequence belongs to the UPF0223 family.

In Streptococcus thermophilus (strain CNRZ 1066), this protein is UPF0223 protein str0998.